Reading from the N-terminus, the 613-residue chain is Activating transcription factor 3 (613 aa).

Disordered stretches follow at residues 77–115 (RHFN…PSVQ) and 133–218 (KRKL…NKIA). Residues 85–105 (GQSHSQDSSHSSCSGSPLDSP) are compositionally biased toward low complexity. The span at 138–147 (TCDSSSGSEQ) shows a compositional bias: polar residues. Residues 158–175 (NHNGHSGSSNNYSGSMSN) show a composition bias toward low complexity. Over residues 178 to 191 (DLDDDCEESSDDDS) the composition is skewed to acidic residues. The bZIP domain occupies 205–268 (EDRRRRRRER…QKLVDMLKSH (64 aa)). The segment at 207–229 (RRRRRRERNKIAATKCRMKKRER) is basic motif. The interval 233–261 (LIKESEVLDTQNVELKNQVRQLETERQKL) is leucine-zipper. Residues 337 to 446 (PNGYCKPSPS…SSNATSSTTP (110 aa)) form a disordered region. Residues 356–368 (QQQQQQQQQQQPQ) are compositionally biased toward low complexity. Positions 369–389 (SLNPAGNNVIDQQHANPSPSL) are enriched in polar residues. A compositionally biased stretch (low complexity) spans 402–446 (GSASNHPSHNNNNNNNNSSGASSNTSNNNSNISSHSSNATSSTTP).

The protein belongs to the bZIP family. ATF subfamily. Interacts with Jra/jun; the interaction enhances the DNA-binding activity of Atf3. Moderate expression in some regions of the larval nervous system, the ring gland and imaginal disks. High expression in larval gut, excretory malpighian tubules, salivary glands, and, to a lesser extent, the fat body where levels are approximately 2.5-fold less than the gut.

Its subcellular location is the nucleus. In terms of biological role, transcription factor which binds to the cAMP response element (CRE). Regulates metabolic and innate immune homeostasis, possibly by controlling appropriate expression of genes involved in peritrophic matrix composition and ensuring the normal digestive and immune function of the gut. Required for the expression of odorant receptors Or43b and Or47b. This Drosophila melanogaster (Fruit fly) protein is Activating transcription factor 3.